Here is a 144-residue protein sequence, read N- to C-terminus: Large ribosomal subunit protein uL16 (144 aa).

Residues 1-19 show a composition bias toward basic residues; sequence MLLPKRVKYRRQHRPKTTG. Residues 1-23 are disordered; it reads MLLPKRVKYRRQHRPKTTGRSKG.

The protein belongs to the universal ribosomal protein uL16 family. In terms of assembly, part of the 50S ribosomal subunit.

In terms of biological role, binds 23S rRNA and is also seen to make contacts with the A and possibly P site tRNAs. This is Large ribosomal subunit protein uL16 from Staphylococcus epidermidis (strain ATCC 35984 / DSM 28319 / BCRC 17069 / CCUG 31568 / BM 3577 / RP62A).